The sequence spans 103 residues: Pro-glucagon (103 aa).

The protein belongs to the glucagon family.

It is found in the secreted. Its function is as follows. Plays a key role in glucose metabolism and homeostasis. Regulates blood glucose by increasing gluconeogenesis and decreasing glycolysis. The polypeptide is Pro-glucagon (gcg) (Aquarana catesbeiana (American bullfrog)).